A 216-amino-acid polypeptide reads, in one-letter code: Putative holocytochrome-c1 synthase (216 aa).

The tract at residues 1 to 46 is disordered; that stretch reads MQPEQLNQEEESKCPVPPEVRDAWLKSHGGKKPSEVHDTPHPTMLP.

This sequence belongs to the cytochrome c-type heme lyase family.

Its subcellular location is the mitochondrion inner membrane. It carries out the reaction holo-[cytochrome c] = apo-[cytochrome c] + heme b. In terms of biological role, lyase that catalyzes the covalent linking of the heme group to the cytochrome C1 apoprotein to produce the mature functional cytochrome. This is Putative holocytochrome-c1 synthase from Schizosaccharomyces pombe (strain 972 / ATCC 24843) (Fission yeast).